Here is a 141-residue protein sequence, read N- to C-terminus: MKTYIPKNDEQNWVVVDAAGVPLGRLATLIASRIRGKHRPDFTPNLIQGDFVVVLNAEKVALTGNKLDGKVYTRYTGYQGGLRTETAREALAKHPERVIEHAVFGMLPKGRQGRSMHNRLKVYAGETHPHTAQKPQTLEVR.

It belongs to the universal ribosomal protein uL13 family. In terms of assembly, part of the 50S ribosomal subunit.

Functionally, this protein is one of the early assembly proteins of the 50S ribosomal subunit, although it is not seen to bind rRNA by itself. It is important during the early stages of 50S assembly. The sequence is that of Large ribosomal subunit protein uL13 from Deinococcus deserti (strain DSM 17065 / CIP 109153 / LMG 22923 / VCD115).